Here is a 422-residue protein sequence, read N- to C-terminus: UDP-N-acetylglucosamine 1-carboxyvinyltransferase (422 aa).

Phosphoenolpyruvate is bound at residue 23–24; it reads KN. Residue Arg-92 participates in UDP-N-acetyl-alpha-D-glucosamine binding. The active-site Proton donor is the Cys-116. Cys-116 is subject to 2-(S-cysteinyl)pyruvic acid O-phosphothioketal. UDP-N-acetyl-alpha-D-glucosamine is bound by residues 121 to 125, 161 to 164, Asp-306, and Ile-328; these read RPVDL and KVSV.

This sequence belongs to the EPSP synthase family. MurA subfamily.

The protein localises to the cytoplasm. It carries out the reaction phosphoenolpyruvate + UDP-N-acetyl-alpha-D-glucosamine = UDP-N-acetyl-3-O-(1-carboxyvinyl)-alpha-D-glucosamine + phosphate. It participates in cell wall biogenesis; peptidoglycan biosynthesis. Its function is as follows. Cell wall formation. Adds enolpyruvyl to UDP-N-acetylglucosamine. The polypeptide is UDP-N-acetylglucosamine 1-carboxyvinyltransferase (Aliivibrio fischeri (strain ATCC 700601 / ES114) (Vibrio fischeri)).